Here is a 263-residue protein sequence, read N- to C-terminus: MAFLWLLSCFALLGTAFGCGVPAIQPVLSGLSRIVNGEDAVPGSWPWQVSLQDSTGFHFCGGSLISEDWVVTAAHCGVRTTHQVVAGEFDQGSDAESIQVLKIAKVFKNPKFNMFTINNDITLLKLATPARFSKTVSAVCLPQATDDFPAGTLCVTTGWGLTKHTNANTPDKLQQAALPLLSNAECKKFWGSKITDLMVCAGASGVSSCMGDSGGPLVCQKDGAWTLVGIVSWGSGTCSTSTPGVYARVTKLIPWVQQILQAN.

The signal sequence occupies residues 1-18; it reads MAFLWLLSCFALLGTAFG. Disulfide bonds link Cys-19–Cys-140, Cys-60–Cys-76, Cys-154–Cys-219, Cys-186–Cys-200, and Cys-209–Cys-238. A Peptidase S1 domain is found at 34–261; the sequence is IVNGEDAVPG…LIPWVQQILQ (228 aa). His-75 acts as the Charge relay system in catalysis. The residue at position 93 (Ser-93) is a Phosphoserine. Asp-120 acts as the Charge relay system in catalysis. Ser-213 serves as the catalytic Charge relay system.

This sequence belongs to the peptidase S1 family.

It localises to the secreted. The protein localises to the extracellular space. The catalysed reaction is Preferential cleavage: Tyr-|-Xaa, Trp-|-Xaa, Phe-|-Xaa, Leu-|-Xaa.. The sequence is that of Chymotrypsinogen 2 (CTRB1) from Canis lupus familiaris (Dog).